The chain runs to 78 residues: MTRHLIFAAMLLVCLFVCWNAVGARDARSAFSLEETAQDEHVMEERVFINPAGNREKNACLENCKSLPNCKNYEFCSK.

Residues Met-1 to Ala-24 form the signal peptide. The propeptide occupies Arg-25–Arg-28.

Belongs to the scoloptoxin-04 family. In terms of processing, contains 2 disulfide bonds. As to expression, expressed by the venom gland.

Its subcellular location is the secreted. This chain is U-scoloptoxin(04)-Er1e, found in Ethmostigmus rubripes (Giant centipede).